We begin with the raw amino-acid sequence, 205 residues long: Large ribosomal subunit protein bL25A (205 aa).

The protein belongs to the bacterial ribosomal protein bL25 family. CTC subfamily. Part of the 50S ribosomal subunit; part of the 5S rRNA/L5/L18/L25 subcomplex. Contacts the 5S rRNA. Binds to the 5S rRNA independently of L5 and L18.

Its function is as follows. This is one of the proteins that binds to the 5S RNA in the ribosome where it forms part of the central protuberance. The sequence is that of Large ribosomal subunit protein bL25A from Symbiobacterium thermophilum (strain DSM 24528 / JCM 14929 / IAM 14863 / T).